The chain runs to 337 residues: Monoacylglycerol lipase ABHD6 (337 aa).

At 1–19 the chain is on the extracellular side; the sequence is MDLDVVNMFVIAGGTLALP. Residues 20 to 42 form a helical; Signal-anchor for type II membrane protein membrane-spanning segment; sequence ILAFVASFLLWPSALIRIYYWYW. Residues 43 to 337 are Cytoplasmic-facing; sequence RRTLGMQVRY…HSTDNSKKLD (295 aa). The 242-residue stretch at 72–313 folds into the AB hydrolase-1 domain; sequence PSILMLHGFS…CGHSVVMERP (242 aa). S148 acts as the Nucleophile in catalysis. Residues D278 and H306 each act as charge relay system in the active site.

The protein belongs to the AB hydrolase superfamily.

Its subcellular location is the late endosome membrane. The protein localises to the lysosome membrane. The protein resides in the mitochondrion membrane. The enzyme catalyses Hydrolyzes glycerol monoesters of long-chain fatty acids.. The catalysed reaction is 1-octanoylglycerol + H2O = octanoate + glycerol + H(+). It carries out the reaction 1-decanoylglycerol + H2O = decanoate + glycerol + H(+). It catalyses the reaction 1-dodecanoylglycerol + H2O = dodecanoate + glycerol + H(+). The enzyme catalyses 1-tetradecanoylglycerol + H2O = tetradecanoate + glycerol + H(+). The catalysed reaction is 2-hexadecanoylglycerol + H2O = glycerol + hexadecanoate + H(+). It carries out the reaction 2-(9Z-octadecenoyl)-glycerol + H2O = glycerol + (9Z)-octadecenoate + H(+). It catalyses the reaction 1-(9Z-octadecenoyl)-glycerol + H2O = glycerol + (9Z)-octadecenoate + H(+). The enzyme catalyses 2-(9Z,12Z-octadecadienoyl)-glycerol + H2O = (9Z,12Z)-octadecadienoate + glycerol + H(+). The catalysed reaction is 2-(5Z,8Z,11Z,14Z-eicosatetraenoyl)-glycerol + H2O = glycerol + (5Z,8Z,11Z,14Z)-eicosatetraenoate + H(+). It carries out the reaction 1-(5Z,8Z,11Z,14Z-eicosatetraenoyl)-glycerol + H2O = glycerol + (5Z,8Z,11Z,14Z)-eicosatetraenoate + H(+). It catalyses the reaction 1-(9Z,12Z-octadecadienoyl)-glycerol + H2O = (9Z,12Z)-octadecadienoate + glycerol + H(+). The enzyme catalyses 3-(9Z-octadecenoyl)-sn-glycero-1-phospho-(3'-(9Z-octadecenoyl)-1'-sn-glycerol) + H2O = 3-(9Z-octadecenoyl)-sn-glycero-1-phospho-(1'-sn-glycerol) + (9Z)-octadecenoate + H(+). The catalysed reaction is (S,S)-2-(9Z-octadecenoyl)-sn-glycero-1-phospho-(2'-(9Z-octadecenoyl)-1'-sn-glycerol) + H2O = (S,S)-2-(9Z-octadecenoyl)-sn-glycero-1-phospho-(1'-sn-glycerol) + (9Z)-octadecenoate + H(+). It carries out the reaction (R,R)-2-(9Z-octadecenoyl)-sn-glycero-3-phospho-(2'-(9Z-octadecenoyl)-3'-sn-glycerol) + H2O = (R,R)-2-(9Z-octadecenoyl)-sn-glycero-3-phospho-(3'-sn-glycerol) + (9Z)-octadecenoate + H(+). Functionally, lipase that preferentially hydrolysis medium-chain saturated monoacylglycerols including 2-arachidonoylglycerol. Through 2-arachidonoylglycerol degradation may regulate endocannabinoid signaling pathways. Also has a lysophosphatidyl lipase activity with a preference for lysophosphatidylglycerol among other lysophospholipids. Also able to degrade bis(monoacylglycero)phosphate (BMP) and constitutes the major enzyme for BMP catabolism. BMP, also known as lysobisphosphatidic acid, is enriched in late endosomes and lysosomes and plays a key role in the formation of intraluminal vesicles and in lipid sorting. The protein is Monoacylglycerol lipase ABHD6 of Bos taurus (Bovine).